The following is a 724-amino-acid chain: Probable ATP-dependent RNA helicase DDX4 (724 aa).

A compositionally biased stretch (acidic residues) spans 1-11 (MSGQEDWESEI). Disordered stretches follow at residues 1–25 (MSGQ…SNSE) and 37–241 (SSNN…QGPR). The span at 108-130 (SNGKQESGDFTNDDNRTIDDNRR) shows a compositional bias: basic and acidic residues. Polar residues predominate over residues 168 to 182 (EQSGFTSNDGFNNET). A Q motif motif is present at residues 286-314 (LTFEEANLCDSLAKNVCKSGYVKLTPIQK). A Helicase ATP-binding domain is found at 317–500 (IPIIVAGRDL…REILKPDYLF (184 aa)). 330 to 337 (AQTGSGKT) contacts ATP. Residues 444–447 (DEAD) carry the DEAD box motif. Residues 512–675 (DVEQMVIEVD…EVPAWLEEVA (164 aa)) enclose the Helicase C-terminal domain. Residues 683–692 (AYNPRSNKFA) are compositionally biased toward polar residues. Residues 683–724 (AYNPRSNKFASTDDRKRGDSRGDYSTSGFSPSAAQAEEEDWG) are disordered. Residues 693–704 (STDDRKRGDSRG) show a composition bias toward basic and acidic residues. A compositionally biased stretch (polar residues) spans 705 to 715 (DYSTSGFSPSA).

It belongs to the DEAD box helicase family. DDX4/VASA subfamily.

It localises to the cytoplasm. The catalysed reaction is ATP + H2O = ADP + phosphate + H(+). In terms of biological role, probable ATP-dependent RNA helicase required during spermatogenesis to repress transposable elements and preventing their mobilization, which is essential for the germline integrity. Acts via the piRNA metabolic process, which mediates the repression of transposable elements during meiosis by forming complexes composed of piRNAs and Piwi proteins and governs the methylation and subsequent repression of transposons. Involved in the secondary piRNAs metabolic process, the production of piRNAs in fetal male germ cells through a ping-pong amplification cycle. This Pelophylax lessonae (Pool frog) protein is Probable ATP-dependent RNA helicase DDX4.